Consider the following 357-residue polypeptide: Alanine racemase (357 aa).

The active-site Proton acceptor; specific for D-alanine is the K34. K34 carries the N6-(pyridoxal phosphate)lysine modification. R127 contributes to the substrate binding site. Catalysis depends on Y252, which acts as the Proton acceptor; specific for L-alanine. Position 301 (M301) interacts with substrate.

Belongs to the alanine racemase family. Pyridoxal 5'-phosphate serves as cofactor.

It carries out the reaction L-alanine = D-alanine. The protein operates within amino-acid biosynthesis; D-alanine biosynthesis; D-alanine from L-alanine: step 1/1. Its function is as follows. Catalyzes the interconversion of L-alanine and D-alanine. May also act on other amino acids. In Dichelobacter nodosus (strain VCS1703A), this protein is Alanine racemase (alr).